The primary structure comprises 188 residues: Large ribosomal subunit protein eL18 (188 aa).

Positions 151-188 are disordered; that stretch reads HFGPAPGVPHSHTKPLVRSKGRKFERARGRRKSCGYKK. 2 stretches are compositionally biased toward basic residues: residues 161 to 171 and 178 to 188; these read SHTKPLVRSKG and RGRRKSCGYKK.

It belongs to the eukaryotic ribosomal protein eL18 family.

It localises to the cytoplasm. The sequence is that of Large ribosomal subunit protein eL18 (RpL18) from Lysiphlebus testaceipes (Greenbugs aphid parastoid).